A 152-amino-acid polypeptide reads, in one-letter code: Large ribosomal subunit protein bL9 (152 aa).

Belongs to the bacterial ribosomal protein bL9 family.

Binds to the 23S rRNA. The protein is Large ribosomal subunit protein bL9 of Pelagibacter ubique (strain HTCC1062).